Reading from the N-terminus, the 443-residue chain is Xaa-Pro dipeptidase (443 aa).

The Mn(2+) site is built by Asp246, Asp257, His339, Glu384, and Glu423.

It belongs to the peptidase M24B family. Bacterial-type prolidase subfamily. It depends on Mn(2+) as a cofactor.

It carries out the reaction Xaa-L-Pro dipeptide + H2O = an L-alpha-amino acid + L-proline. Functionally, splits dipeptides with a prolyl residue in the C-terminal position. The polypeptide is Xaa-Pro dipeptidase (Shigella flexneri serotype 5b (strain 8401)).